The sequence spans 213 residues: Motile sperm domain-containing protein 1 (213 aa).

The 128-residue stretch at 16–143 (PVFVFPTELI…KEHLTESVFF (128 aa)) folds into the MSP domain. 2 helical membrane passes run 159–179 (SLLTVFLGVVCIAALMLPTLG) and 191–211 (LSVNQKLVAAYILGLITMAIL). Positions 205–208 (LITM) match the Nuclear export signal motif.

As to expression, widely expressed. Shows highest expression in ribs, and slightly lower levels of expression in heart, kidney, muscle, thymus, calvariae and lung. Also detected at low levels in spleen and liver.

Its subcellular location is the endoplasmic reticulum membrane. It is found in the golgi apparatus membrane. Functionally, plays a role in differentiation and/or proliferation of mesenchymal stem cells. Proposed to be involved in epithelial-to-mesenchymal transition (EMT). However, another study suggests that it is not required for EMT or stem cell self-renewal and acts during later stages of differentiation. The protein is Motile sperm domain-containing protein 1 (Mospd1) of Mus musculus (Mouse).